The chain runs to 629 residues: Pumilio homolog 3 (629 aa).

Basic residues-rich tracts occupy residues 1-10 and 18-37; these read MEGKPRKKSF and PSFK…RPFK. The tract at residues 1–92 is disordered; that stretch reads MEGKPRKKSF…EGDERKKPKW (92 aa). Over residues 62-92 the composition is skewed to basic and acidic residues; the sequence is KPTDGKFAKKRKFPGDRIKQEEGDERKKPKW. Positions 88-100 match the Nuclear localization signal motif; the sequence is KKPKWDEFKQKKK. The PUM-HD domain occupies 120–473; the sequence is RAKQVWEMVR…ELLEAASPSL (354 aa). Pumilio repeat units lie at residues 160 to 195, 196 to 231, 232 to 260, 272 to 308, 309 to 344, 345 to 380, 381 to 418, 419 to 487, 488 to 534, 535 to 579, and 580 to 618; these read HDST…LSKS, KYAR…MLRH, SEAS…ELYG, PTLE…VIKH, SLVH…MAHT, HDGA…FAMG, EYAH…IISN, KHGK…MVMD, KSCC…MAEH, PAGH…WASV, and NRGA…LQNS.

In terms of tissue distribution, in adult, expressed at high levels in eye and ovary and at lower levels in brain, testis and head kidney. In the adult ovary, prominently expressed in early immature follicles.

Its subcellular location is the nucleus. It localises to the nucleolus. It is found in the nucleoplasm. The protein resides in the chromosome. In terms of biological role, inhibits the poly(ADP-ribosyl)ation activity of PARP1 and the degradation of PARP1 by CASP3 following genotoxic stress. Binds to double-stranded RNA or DNA without sequence specificity. Involved in development of the eye and of primordial germ cells. This is Pumilio homolog 3 (pum3) from Danio rerio (Zebrafish).